The chain runs to 181 residues: Protoporphyrinogen IX dehydrogenase [quinone] (181 aa).

In terms of domain architecture, Flavodoxin-like spans 3–172; it reads TLILFSTRDG…QVANFAREIA (170 aa). FMN is bound by residues 9–13 and 84–152; these read TRDGQ and FYSV…ETDT.

The protein belongs to the HemG family. Requires FMN as cofactor.

The protein resides in the cell inner membrane. It carries out the reaction protoporphyrinogen IX + 3 a menaquinone = protoporphyrin IX + 3 a menaquinol. The enzyme catalyses protoporphyrinogen IX + 3 a ubiquinone = protoporphyrin IX + 3 a ubiquinol. The catalysed reaction is protoporphyrinogen IX + 3 a quinone = protoporphyrin IX + 3 a quinol. The protein operates within porphyrin-containing compound metabolism; protoporphyrin-IX biosynthesis; protoporphyrin-IX from protoporphyrinogen-IX: step 1/1. Catalyzes the 6-electron oxidation of protoporphyrinogen IX to form protoporphyrin IX; under anaerobic conditions uses menaquinone as an electron acceptor, under aerobic condition uses ubiquinone as an electron acceptor. This is Protoporphyrinogen IX dehydrogenase [quinone] from Escherichia coli O157:H7.